The primary structure comprises 657 residues: Probable cytochrome P450 556A1 (657 aa).

The chain crosses the membrane as a helical span at residues 2–24 (FLTSILYTIIIILIFYKGLEYLI). The tract at residues 440 to 486 (RSLPSINNNNNNNNNNNNNNNNNNNNNNNNNSNNNSINGNNKNNNRN) is disordered. The segment covering 446-486 (NNNNNNNNNNNNNNNNNNNNNNNNNSNNNSINGNNKNNNRN) has biased composition (low complexity). Cys-587 lines the heme pocket.

The protein belongs to the cytochrome P450 family. Requires heme as cofactor.

It localises to the membrane. This is Probable cytochrome P450 556A1 (cyp556A1) from Dictyostelium discoideum (Social amoeba).